Reading from the N-terminus, the 121-residue chain is Large ribosomal subunit protein uL18 (121 aa).

It belongs to the universal ribosomal protein uL18 family. Part of the 50S ribosomal subunit; part of the 5S rRNA/L5/L18/L25 subcomplex. Contacts the 5S and 23S rRNAs.

This is one of the proteins that bind and probably mediate the attachment of the 5S RNA into the large ribosomal subunit, where it forms part of the central protuberance. In Paraburkholderia phytofirmans (strain DSM 17436 / LMG 22146 / PsJN) (Burkholderia phytofirmans), this protein is Large ribosomal subunit protein uL18.